We begin with the raw amino-acid sequence, 325 residues long: Transaldolase (325 aa).

The active-site Schiff-base intermediate with substrate is the K125.

Belongs to the transaldolase family. Type 2 subfamily.

The protein localises to the cytoplasm. It carries out the reaction D-sedoheptulose 7-phosphate + D-glyceraldehyde 3-phosphate = D-erythrose 4-phosphate + beta-D-fructose 6-phosphate. The protein operates within carbohydrate degradation; pentose phosphate pathway; D-glyceraldehyde 3-phosphate and beta-D-fructose 6-phosphate from D-ribose 5-phosphate and D-xylulose 5-phosphate (non-oxidative stage): step 2/3. Transaldolase is important for the balance of metabolites in the pentose-phosphate pathway. The protein is Transaldolase of Campylobacter jejuni subsp. jejuni serotype O:23/36 (strain 81-176).